A 541-amino-acid polypeptide reads, in one-letter code: Glucose-6-phosphate isomerase (541 aa).

Catalysis depends on Glu353, which acts as the Proton donor. Residues His384 and Lys504 contribute to the active site.

It belongs to the GPI family.

The protein localises to the cytoplasm. The enzyme catalyses alpha-D-glucose 6-phosphate = beta-D-fructose 6-phosphate. Its pathway is carbohydrate biosynthesis; gluconeogenesis. It participates in carbohydrate degradation; glycolysis; D-glyceraldehyde 3-phosphate and glycerone phosphate from D-glucose: step 2/4. Functionally, catalyzes the reversible isomerization of glucose-6-phosphate to fructose-6-phosphate. This Deinococcus radiodurans (strain ATCC 13939 / DSM 20539 / JCM 16871 / CCUG 27074 / LMG 4051 / NBRC 15346 / NCIMB 9279 / VKM B-1422 / R1) protein is Glucose-6-phosphate isomerase.